We begin with the raw amino-acid sequence, 343 residues long: Ferredoxin--NADP reductase (343 aa).

The FAD site is built by C18, D37, Q45, Y50, V90, F125, D290, and T331.

The protein belongs to the ferredoxin--NADP reductase type 2 family. As to quaternary structure, homodimer. The cofactor is FAD.

It catalyses the reaction 2 reduced [2Fe-2S]-[ferredoxin] + NADP(+) + H(+) = 2 oxidized [2Fe-2S]-[ferredoxin] + NADPH. The protein is Ferredoxin--NADP reductase of Parvibaculum lavamentivorans (strain DS-1 / DSM 13023 / NCIMB 13966).